The following is a 60-amino-acid chain: Three-finger toxin Mnn I (60 aa).

4 cysteine pairs are disulfide-bonded: cysteine 3–cysteine 22, cysteine 17–cysteine 39, cysteine 41–cysteine 52, and cysteine 53–cysteine 58.

Belongs to the three-finger toxin family. Short-chain subfamily. Type I alpha-neurotoxin sub-subfamily. As to expression, expressed by the venom gland.

The protein localises to the secreted. Binds to muscle nicotinic acetylcholine receptor (nAChR) and inhibit acetylcholine from binding to the receptor, thereby impairing neuromuscular transmission. The chain is Three-finger toxin Mnn I from Micrurus nigrocinctus (Central American coral snake).